The following is a 775-amino-acid chain: 1,4-alpha-glucan branching enzyme GlgB (775 aa).

A disordered region spans residues 1–39 (MTSVHDFATATRPATPSAAAQEPAPALPPGLDRNTLDAL). The segment covering 8–24 (ATATRPATPSAAAQEPA) has biased composition (low complexity). The Nucleophile role is filled by D454. Residue E507 is the Proton donor of the active site.

Belongs to the glycosyl hydrolase 13 family. GlgB subfamily. Monomer.

It carries out the reaction Transfers a segment of a (1-&gt;4)-alpha-D-glucan chain to a primary hydroxy group in a similar glucan chain.. The protein operates within glycan biosynthesis; glycogen biosynthesis. Functionally, catalyzes the formation of the alpha-1,6-glucosidic linkages in glycogen by scission of a 1,4-alpha-linked oligosaccharide from growing alpha-1,4-glucan chains and the subsequent attachment of the oligosaccharide to the alpha-1,6 position. The polypeptide is 1,4-alpha-glucan branching enzyme GlgB (Ralstonia nicotianae (strain ATCC BAA-1114 / GMI1000) (Ralstonia solanacearum)).